A 412-amino-acid polypeptide reads, in one-letter code: GATOR complex protein NPRL2 (412 aa).

Belongs to the NPR2 family. In terms of assembly, component of the GATOR complex consisting of mio, Nup44A/Seh1, Im11, Nplr3, Nplr2, Wdr24, Wdr59 and Sec13. Within the GATOR complex, probable component of the GATOR1 subcomplex which is likely composed of Iml1, Nplr2 and Nplr3. Interacts with Nprl3.

It localises to the cytoplasm. It is found in the lysosome. In terms of biological role, an essential component of the GATOR subcomplex GATOR1 which functions as an inhibitor of the amino acid-sensing branch of the TORC1 signaling pathway. The two GATOR subcomplexes, GATOR1 and GATOR2, regulate the TORC1 pathway in order to mediate metabolic homeostasis, female gametogenesis and the response to amino acid limitation and complete starvation. The function of GATOR1 in negatively regulating the TORC1 pathway is essential for maintaining baseline levels of TORC1 activity under nutrient rich conditions, and for promoting survival during amino acid or complete starvation by inhibiting TORC1-dependent cell growth and promoting catabolic metabolism and autophagy. In addition, this inhibition of TORC1 is necessary to maintain female fertility under normal conditions and during periods of nutrient stress. GATOR1 and GATOR2 act at different stages of oogenesis to regulate TORC1 in order to control meiotic entry and promote oocyte growth and development. After exactly four mitotic cyst divisions, the GATOR1 complex members (Iml1, Nprl2 and Nprl3) down-regulate TORC1 to slow cellular metabolism and promote the mitotic/meiotic transition. At later stages of oogenesis, the mio and Nup44A components of the GATOR2 complex inhibit GATOR1 and thus activate TORC1 to promote meiotic progression, and drive oocyte growth and development. In Drosophila melanogaster (Fruit fly), this protein is GATOR complex protein NPRL2.